Consider the following 433-residue polypeptide: tRNA-2-methylthio-N(6)-dimethylallyladenosine synthase (433 aa).

In terms of domain architecture, MTTase N-terminal spans 3–118 (KRLYIETLGC…IRDVIKQEKA (116 aa)). [4Fe-4S] cluster contacts are provided by cysteine 12, cysteine 49, cysteine 81, cysteine 150, cysteine 154, and cysteine 157. The 236-residue stretch at 136–371 (RTSPYKAFIN…LHLQMLDSIS (236 aa)) folds into the Radical SAM core domain. The TRAM domain occupies 372–433 (EQEKDKVYEV…RLSLEGELVG (62 aa)).

This sequence belongs to the methylthiotransferase family. MiaB subfamily. In terms of assembly, monomer. [4Fe-4S] cluster serves as cofactor.

Its subcellular location is the cytoplasm. It carries out the reaction N(6)-dimethylallyladenosine(37) in tRNA + (sulfur carrier)-SH + AH2 + 2 S-adenosyl-L-methionine = 2-methylsulfanyl-N(6)-dimethylallyladenosine(37) in tRNA + (sulfur carrier)-H + 5'-deoxyadenosine + L-methionine + A + S-adenosyl-L-homocysteine + 2 H(+). In terms of biological role, catalyzes the methylthiolation of N6-(dimethylallyl)adenosine (i(6)A), leading to the formation of 2-methylthio-N6-(dimethylallyl)adenosine (ms(2)i(6)A) at position 37 in tRNAs that read codons beginning with uridine. The protein is tRNA-2-methylthio-N(6)-dimethylallyladenosine synthase of Nitratiruptor sp. (strain SB155-2).